Reading from the N-terminus, the 382-residue chain is Cytochrome c biogenesis CcmF N-terminal-like mitochondrial protein 1 (382 aa).

The next 4 helical transmembrane spans lie at 1–21, 30–50, 79–99, and 117–137; these read MSISIYEFFHYSLFLGLFVAF, AFGAALAFWCILLSFLGLLFC, HEGSILLWCWILNFYGFFFCY, and SLFFFFVLNFVKNSILSLLRY.

This sequence belongs to the CcmF/CycK/Ccl1/NrfE/CcsA family. Interacts with CCMFN2 and CCMH.

The protein localises to the mitochondrion inner membrane. In terms of biological role, forms a complex with CCMFC, CCMFN2 and CCMH that performs the assembly of heme with c-type apocytochromes in mitochondria. The protein is Cytochrome c biogenesis CcmF N-terminal-like mitochondrial protein 1 of Arabidopsis thaliana (Mouse-ear cress).